The chain runs to 107 residues: Nucleoid-associated protein Oant_0022 (107 aa).

It belongs to the YbaB/EbfC family. Homodimer.

It localises to the cytoplasm. Its subcellular location is the nucleoid. In terms of biological role, binds to DNA and alters its conformation. May be involved in regulation of gene expression, nucleoid organization and DNA protection. In Brucella anthropi (strain ATCC 49188 / DSM 6882 / CCUG 24695 / JCM 21032 / LMG 3331 / NBRC 15819 / NCTC 12168 / Alc 37) (Ochrobactrum anthropi), this protein is Nucleoid-associated protein Oant_0022.